A 305-amino-acid polypeptide reads, in one-letter code: Protein FdhE homolog (305 aa).

It belongs to the FdhE family.

Its subcellular location is the cytoplasm. Necessary for formate dehydrogenase activity. This is Protein FdhE homolog from Stutzerimonas stutzeri (strain A1501) (Pseudomonas stutzeri).